The primary structure comprises 75 residues: Translation initiation factor IF-1, chloroplastic (75 aa).

Positions 1–72 (MKKQNLIHAE…TKGRIIYRLS (72 aa)) constitute an S1-like domain.

The protein belongs to the IF-1 family. Component of the 30S ribosomal translation pre-initiation complex which assembles on the 30S ribosome in the order IF-2 and IF-3, IF-1 and N-formylmethionyl-tRNA(fMet); mRNA recruitment can occur at any time during PIC assembly.

Its subcellular location is the plastid. The protein resides in the chloroplast. One of the essential components for the initiation of protein synthesis. Stabilizes the binding of IF-2 and IF-3 on the 30S subunit to which N-formylmethionyl-tRNA(fMet) subsequently binds. Helps modulate mRNA selection, yielding the 30S pre-initiation complex (PIC). Upon addition of the 50S ribosomal subunit IF-1, IF-2 and IF-3 are released leaving the mature 70S translation initiation complex. This is Translation initiation factor IF-1, chloroplastic from Pinus koraiensis (Korean pine).